The following is a 939-amino-acid chain: Translation initiation factor IF-2 (939 aa).

A compositionally biased stretch (basic and acidic residues) spans 81 to 94 (EEQSRKAYEKEQQL). Disordered stretches follow at residues 81 to 303 (EEQS…KKVE) and 316 to 337 (TISG…KMRR). The span at 99 to 108 (SSAPSPAPAA) shows a compositional bias: low complexity. Composition is skewed to basic and acidic residues over residues 112–127 (EPVK…RHEP) and 148–173 (SPKE…EKAA). Residues 178 to 189 (EAQPEAQSQQEP) show a composition bias toward low complexity. A compositionally biased stretch (basic and acidic residues) spans 244 to 255 (FKENAAELKDEF). Residues 276 to 287 (AAGEGESTTGGE) show a composition bias toward low complexity. Basic residues predominate over residues 292-301 (KKKKGKKKKK). The span at 318–328 (SGMDDSGSSGS) shows a compositional bias: low complexity. The tr-type G domain occupies 436–606 (TRPPVVTIMG…LTEAEVRELK (171 aa)). The G1 stretch occupies residues 445–452 (GHVDHGKT). 445-452 (GHVDHGKT) contributes to the GTP binding site. The tract at residues 470–474 (GITQH) is G2. Residues 492–495 (DTPG) are G3. GTP-binding positions include 492-496 (DTPGH) and 546-549 (NKID). Residues 546 to 549 (NKID) are G4. The tract at residues 582 to 584 (SAK) is G5.

The protein belongs to the TRAFAC class translation factor GTPase superfamily. Classic translation factor GTPase family. IF-2 subfamily.

It is found in the cytoplasm. One of the essential components for the initiation of protein synthesis. Protects formylmethionyl-tRNA from spontaneous hydrolysis and promotes its binding to the 30S ribosomal subunits. Also involved in the hydrolysis of GTP during the formation of the 70S ribosomal complex. The chain is Translation initiation factor IF-2 from Chlorobaculum parvum (strain DSM 263 / NCIMB 8327) (Chlorobium vibrioforme subsp. thiosulfatophilum).